Reading from the N-terminus, the 79-residue chain is Conotoxin 1 (79 aa).

Positions 1–22 (MKLTCVLIITVLFLTASQLITA) are cleaved as a signal peptide. A propeptide spanning residues 23–46 (DYSRDQRQYRAVRLGDEMRTFKGA) is cleaved from the precursor. 3 cysteine pairs are disulfide-bonded: C49/C62, C56/C67, and C61/C77.

This sequence belongs to the conotoxin O1 superfamily. In terms of tissue distribution, expressed by the venom duct.

It localises to the secreted. The polypeptide is Conotoxin 1 (Conus vexillum (Flag cone)).